The chain runs to 32 residues: Basic phospholipase A2 (32 aa).

The Ca(2+) site is built by Tyr26, Gly28, and Gly30.

Belongs to the phospholipase A2 family. Group II subfamily. Ca(2+) is required as a cofactor. Expressed by the venom gland.

Its subcellular location is the secreted. It carries out the reaction a 1,2-diacyl-sn-glycero-3-phosphocholine + H2O = a 1-acyl-sn-glycero-3-phosphocholine + a fatty acid + H(+). Functionally, snake venom phospholipase A2 (PLA2) that inhibits neuromuscular transmission by blocking acetylcholine release from the nerve termini. PLA2 catalyzes the calcium-dependent hydrolysis of the 2-acyl groups in 3-sn-phosphoglycerides. This is Basic phospholipase A2 from Gloydius halys (Chinese water mocassin).